A 406-amino-acid chain; its full sequence is MTFLQRLQGLADNKICAFAWFVVRRFDEERVPQAAASMTFTTLLALVPVLTVMVAVASIFPVFDRWSDSFVSFVNQTIVPQGADMVFDYINAFREQANRLTAIGSVMLVVTSLMLIRTIDNTFNRIWRVNSQRPWMMQFLVYWALLTFGPLSLGVGISFMVGSVQDAALASGAPQWSGALRTAATLTFMTLLLWGLYRFVPNRFVPARQAFVGALATAFCLETARSLFTWYMGNFDGYRSIYGAFAAVPFFLLWLNLLWTLVLGGAVLTSSLSYWQGEAFRRGFDSRGRFDDVLKILLLLDAAQKEGKALPVQEFRRHINMGYDELGELLEKLARHGYIYSGRQGWVLKTGADSIELNELFKLFVYRPLPVERDHVNQAVDAVMTPCLQTLNMTLAEFDAQAKKRQ.

6 helical membrane-spanning segments follow: residues 43–63, 100–120, 139–159, 176–196, 210–230, and 248–268; these read LLAL…FPVF, LTAI…RTID, FLVY…GISF, WSGA…LWGL, AFVG…LFTW, and VPFF…GAVL.

The protein belongs to the UPF0761 family.

The protein resides in the cell inner membrane. The polypeptide is UPF0761 membrane protein NMB0524 (Neisseria meningitidis serogroup B (strain ATCC BAA-335 / MC58)).